The following is a 264-amino-acid chain: Mannose-specific lectin CEA (264 aa).

The first 23 residues, 1–23 (MAKLLLFLLPAILGLLVPRSAVA), serve as a signal peptide directing secretion. 2 Bulb-type lectin domains span residues 26-131 (TNYL…PWVP) and 145-252 (NNLL…PQAK). Beta-D-mannose is bound by residues 51–55 (QDDCN), Tyr-59, Trp-63, Gln-64, 170–174 (QGDCN), Tyr-178, and 182–185 (YGWQ). Positions 51–59 (QDDCNLVLY) match the Carbohydrate-binding motif 1 motif. 2 cysteine pairs are disulfide-bonded: Cys-54–Cys-74 and Cys-173–Cys-195. The short motif at 170-178 (QGDCNLVLY) is the Carbohydrate-binding motif 2 element.

Forms heterotetramer of 2 chains 1 and 2 chains 2 arranged as a dimer of chain 1 and chain 2 heterodimers.

The protein resides in the secreted. Functionally, mannose-specific lectin. Shows agglutinating activity towards erythrocytes from rabbit. Has insecticidal activity against cotton aphids and other hemipteran insects. The protein is Mannose-specific lectin CEA of Colocasia esculenta (Wild taro).